We begin with the raw amino-acid sequence, 305 residues long: Glycine--tRNA ligase alpha subunit (305 aa).

Belongs to the class-II aminoacyl-tRNA synthetase family. As to quaternary structure, tetramer of two alpha and two beta subunits.

Its subcellular location is the cytoplasm. The catalysed reaction is tRNA(Gly) + glycine + ATP = glycyl-tRNA(Gly) + AMP + diphosphate. The polypeptide is Glycine--tRNA ligase alpha subunit (Streptococcus pneumoniae (strain ATCC 700669 / Spain 23F-1)).